The sequence spans 534 residues: Probable DNA polymerase epsilon subunit 2 (534 aa).

The protein belongs to the DNA polymerase epsilon subunit B family. As to quaternary structure, consists of four subunits.

The protein localises to the nucleus. In terms of biological role, accessory component of the DNA polymerase epsilon complex. Participates in DNA repair and in chromosomal DNA replication. In Caenorhabditis elegans, this protein is Probable DNA polymerase epsilon subunit 2 (pole-2).